The sequence spans 396 residues: 1-deoxy-D-xylulose 5-phosphate reductoisomerase (396 aa).

NADPH contacts are provided by T13, G14, S15, I16, and N127. K128 contacts 1-deoxy-D-xylulose 5-phosphate. Position 129 (E129) interacts with NADPH. D153 provides a ligand contact to Mn(2+). Residues S154, E155, S184, and H207 each coordinate 1-deoxy-D-xylulose 5-phosphate. E155 lines the Mn(2+) pocket. G213 is an NADPH binding site. The 1-deoxy-D-xylulose 5-phosphate site is built by S220, N225, K226, and E229. Residue E229 coordinates Mn(2+).

It belongs to the DXR family. Requires Mg(2+) as cofactor. Mn(2+) serves as cofactor.

It carries out the reaction 2-C-methyl-D-erythritol 4-phosphate + NADP(+) = 1-deoxy-D-xylulose 5-phosphate + NADPH + H(+). It participates in isoprenoid biosynthesis; isopentenyl diphosphate biosynthesis via DXP pathway; isopentenyl diphosphate from 1-deoxy-D-xylulose 5-phosphate: step 1/6. Its function is as follows. Catalyzes the NADPH-dependent rearrangement and reduction of 1-deoxy-D-xylulose-5-phosphate (DXP) to 2-C-methyl-D-erythritol 4-phosphate (MEP). This is 1-deoxy-D-xylulose 5-phosphate reductoisomerase from Pseudomonas fluorescens (strain ATCC BAA-477 / NRRL B-23932 / Pf-5).